Reading from the N-terminus, the 466-residue chain is MEIGTSSTTNNIGVAPTIPQDIVNNNNHNNNSSNNSSNNNSISSSPTDSSQLMNGEQSTSPPSPPIEEVLEEEPRNLLISLLSELKIGVDLSRVPLPTFILEPRSLLEKFTDNMIHGEILCNLSKLESPMDRMHLITKWYLSAFHYRKKGLQKPYNPILGEIFRTRWEFKETNSNCIMVAEQISHHPPVSCIYLSNRKDGYTMTGTINPRSKFLGNSMAVIVDGSSTLTLLGLQEEYVITFPTAVARGIIFGTLLTEIVGNSTISCKQTNIKVEMDFKAKPMFGGEYNVVCGKIKKGNETTHTFNGKWDKKVEITLSSSSSSSKKKNGSTNDILWDCNDAVKTQMITRQISEQEEFESQRLWQKVSHAIIKKNQKDATFEKNKLEDEQRKRVKDRKENNIEWEPRLFKKVNDQWIYKYQNHTLYDQNEPKEIETDGIIHFEGTLIKKESKQNLVEKCGASENEIIV.

Over residues 1–12 the composition is skewed to polar residues; sequence MEIGTSSTTNNI. The tract at residues 1 to 67 is disordered; the sequence is MEIGTSSTTN…STSPPSPPIE (67 aa). The span at 24 to 45 shows a compositional bias: low complexity; the sequence is NNNNHNNNSSNNSSNNNSISSS. Residues 46–60 are compositionally biased toward polar residues; it reads PTDSSQLMNGEQSTS.

This sequence belongs to the OSBP family.

The sequence is that of Oxysterol-binding protein 4 (osbD) from Dictyostelium discoideum (Social amoeba).